The following is a 127-amino-acid chain: Aspartate 1-decarboxylase (127 aa).

Ser-25 functions as the Schiff-base intermediate with substrate; via pyruvic acid in the catalytic mechanism. The residue at position 25 (Ser-25) is a Pyruvic acid (Ser). Thr-57 lines the substrate pocket. Tyr-58 functions as the Proton donor in the catalytic mechanism. 73 to 75 (GAA) serves as a coordination point for substrate.

It belongs to the PanD family. In terms of assembly, heterooctamer of four alpha and four beta subunits. Requires pyruvate as cofactor. Is synthesized initially as an inactive proenzyme, which is activated by self-cleavage at a specific serine bond to produce a beta-subunit with a hydroxyl group at its C-terminus and an alpha-subunit with a pyruvoyl group at its N-terminus.

Its subcellular location is the cytoplasm. It carries out the reaction L-aspartate + H(+) = beta-alanine + CO2. The protein operates within cofactor biosynthesis; (R)-pantothenate biosynthesis; beta-alanine from L-aspartate: step 1/1. In terms of biological role, catalyzes the pyruvoyl-dependent decarboxylation of aspartate to produce beta-alanine. The polypeptide is Aspartate 1-decarboxylase (Bacillus cereus (strain ATCC 10987 / NRS 248)).